Reading from the N-terminus, the 466-residue chain is MRAPGMRSRPAGPALLLLLLFLGAAESVRRAQPPRRYTPDWPSLDSRPLPAWFDEAKFGVFIHWGVFSVPAWGSEWFWWHWQGEGRPQYQRFMRDNYPPGFSYADFGPQFTARFFHPEEWADLFQAAGAKYVVLTTKHHEGFTNWPSPVSWNWNSKDVGPHRDLVGELGTALRKRNIRYGLYHSLLEWFHPLYLLDKKNGFKTQHFVSAKTMPELYDLVNSYKPDLIWSDGEWECPDTYWNSTNFLSWLYNDSPVKDEVVVNDRWGQNCSCHHGGYYNCEDKFKPQSLPDHKWEMCTSIDKFSWGYRRDMALSDVTEESEIISELVQTVSLGGNYLLNIGPTKDGLIVPIFQERLLAVGKWLSINGEAIYASKPWRVQWEKNTTSVWYTSKGSAVYAIFLHWPENGVLNLESPITTSTTKITMLGIQGDLKWSTDPDKGLFISLPQLPPSAVPAEFAWTIKLTGVK.

Residues 1–31 (MRAPGMRSRPAGPALLLLLLFLGAAESVRRA) form the signal peptide. A Phosphothreonine modification is found at threonine 170. Asparagine 241, asparagine 268, and asparagine 382 each carry an N-linked (GlcNAc...) asparagine glycan.

It belongs to the glycosyl hydrolase 29 family. As to quaternary structure, homotetramer.

The protein localises to the lysosome. It carries out the reaction an alpha-L-fucoside + H2O = L-fucose + an alcohol. The catalysed reaction is a neolactoside IV(2)-alpha-Fuc-nLc4Cer(d18:1(4E)) + H2O = a neolactoside nLc4Cer(d18:1(4E)) + L-fucose. It catalyses the reaction a neolactoside IV(2)-alpha-Fuc-nLc4Cer(d18:0) + H2O = a neolactoside nLc4Cer(d18:0) + L-fucose. Its function is as follows. Alpha-L-fucosidase is responsible for hydrolyzing the alpha-1,6-linked fucose joined to the reducing-end N-acetylglucosamine of the carbohydrate moieties of glycoproteins. The polypeptide is Tissue alpha-L-fucosidase (Homo sapiens (Human)).